The following is a 269-amino-acid chain: uncharacterized protein (269 aa).

Position 103-110 (103-110) interacts with ATP; that stretch reads GIFTMGKS.

This is an uncharacterized protein from Mycoplasma pneumoniae (strain ATCC 29342 / M129 / Subtype 1) (Mycoplasmoides pneumoniae).